The following is a 215-amino-acid chain: ATP phosphoribosyltransferase (215 aa).

The protein belongs to the ATP phosphoribosyltransferase family. Short subfamily. Heteromultimer composed of HisG and HisZ subunits.

It localises to the cytoplasm. It carries out the reaction 1-(5-phospho-beta-D-ribosyl)-ATP + diphosphate = 5-phospho-alpha-D-ribose 1-diphosphate + ATP. It participates in amino-acid biosynthesis; L-histidine biosynthesis; L-histidine from 5-phospho-alpha-D-ribose 1-diphosphate: step 1/9. Functionally, catalyzes the condensation of ATP and 5-phosphoribose 1-diphosphate to form N'-(5'-phosphoribosyl)-ATP (PR-ATP). Has a crucial role in the pathway because the rate of histidine biosynthesis seems to be controlled primarily by regulation of HisG enzymatic activity. The protein is ATP phosphoribosyltransferase of Prochlorococcus marinus (strain MIT 9215).